Here is a 429-residue protein sequence, read N- to C-terminus: MATVVIVGSQWGDEGKGKMTDYLSQEANVVVRSQGGDNAGHTIEFDRQKFALRLIPSGIFGENTTAVIGNGVVINPQALLEEIKYLTDRGVDISGLKISSRAQVIMPYHLLLDECQEKAKGAAKIGTTKKGIGPTYVDKVSRIGIRVADLLEKDTFAAKLKQNLEIKNQLFTKIYGVDPVDFDEIFNQYYEYGQQIKQYVTDTSLLVNDAIDRGDKVLFEGAQGTMLDIDEGTYPYVTSSNPTAGGAPTGAGVGPNKIETVVGIAKAYTTRVGEGPFPTELNDEIGDYIRETGHEYGTVTGRPRRVGWFDAVAMRHARRVNGMTYLSLNLLDVLTGLKTIKIARAYELDGQEINYYPASLAELDRCTPLYEEVPGWEEDITQVTDYEDLPANAKHFLDRIVELSETPLATISVGPSREQTIILRDPWRG.

GTP-binding positions include 12 to 18 and 40 to 42; these read GDEGKGK and GHT. D13 (proton acceptor) is an active-site residue. Mg(2+)-binding residues include D13 and G40. IMP is bound by residues 13 to 16, 38 to 41, T128, R142, Q223, T238, and R302; these read DEGK and NAGH. Residue H41 is the Proton donor of the active site. 298–304 provides a ligand contact to substrate; the sequence is TVTGRPR. GTP is bound by residues R304, 330–332, and 412–414; these read LLD and SVG.

Belongs to the adenylosuccinate synthetase family. Homodimer. Mg(2+) serves as cofactor.

It is found in the cytoplasm. It catalyses the reaction IMP + L-aspartate + GTP = N(6)-(1,2-dicarboxyethyl)-AMP + GDP + phosphate + 2 H(+). It participates in purine metabolism; AMP biosynthesis via de novo pathway; AMP from IMP: step 1/2. Functionally, plays an important role in the de novo pathway of purine nucleotide biosynthesis. Catalyzes the first committed step in the biosynthesis of AMP from IMP. In Limosilactobacillus fermentum (strain NBRC 3956 / LMG 18251) (Lactobacillus fermentum), this protein is Adenylosuccinate synthetase.